A 272-amino-acid chain; its full sequence is Putative hydro-lyase RPB_3621 (272 aa).

Belongs to the D-glutamate cyclase family.

The protein is Putative hydro-lyase RPB_3621 of Rhodopseudomonas palustris (strain HaA2).